Reading from the N-terminus, the 154-residue chain is Methylglyoxal synthase (154 aa).

The MGS-like domain occupies 6–154; that stretch reads SPLPANKAIA…AYMARRAQGN (149 aa). Substrate-binding positions include His19, Lys23, 45–48, and 65–66; these read TGTT and SG. Residue Asp71 is the Proton donor/acceptor of the active site. His98 serves as a coordination point for substrate.

It belongs to the methylglyoxal synthase family.

It catalyses the reaction dihydroxyacetone phosphate = methylglyoxal + phosphate. Functionally, catalyzes the formation of methylglyoxal from dihydroxyacetone phosphate. This is Methylglyoxal synthase from Cellvibrio japonicus (strain Ueda107) (Pseudomonas fluorescens subsp. cellulosa).